An 86-amino-acid polypeptide reads, in one-letter code: Large ribosomal subunit protein bL27 (86 aa).

The segment covering 1–10 (MAQKKGGGST) has biased composition (gly residues). A disordered region spans residues 1-21 (MAQKKGGGSTRNGRDSESKRL).

This sequence belongs to the bacterial ribosomal protein bL27 family.

This Cupriavidus taiwanensis (strain DSM 17343 / BCRC 17206 / CCUG 44338 / CIP 107171 / LMG 19424 / R1) (Ralstonia taiwanensis (strain LMG 19424)) protein is Large ribosomal subunit protein bL27.